We begin with the raw amino-acid sequence, 177 residues long: RNA pyrophosphohydrolase (177 aa).

In terms of domain architecture, Nudix hydrolase spans 6-149; sequence GYRPNVGIVI…KRDVYRRVMK (144 aa). Residues 38–59 carry the Nudix box motif; the sequence is GGINAGETAEQAMYRELFEEVG.

This sequence belongs to the Nudix hydrolase family. RppH subfamily. A divalent metal cation serves as cofactor.

Accelerates the degradation of transcripts by removing pyrophosphate from the 5'-end of triphosphorylated RNA, leading to a more labile monophosphorylated state that can stimulate subsequent ribonuclease cleavage. This chain is RNA pyrophosphohydrolase, found in Edwardsiella ictaluri (strain 93-146).